Here is a 266-residue protein sequence, read N- to C-terminus: Dolichol-phosphate mannosyltransferase subunit 1 (266 aa).

The span at 1–19 (MASPGASRGASAATAAAAS) shows a compositional bias: low complexity. The tract at residues 1–31 (MASPGASRGASAATAAAASPRPPQGRSSRRD) is disordered. Ala2 is subject to N-acetylalanine. Ser3 carries the post-translational modification Phosphoserine. Residues Pro38, Tyr40, Glu42, Ile69, Asp71, Asp124, Ala125, Asp126, Arg153, Arg240, and Lys246 each contribute to the GDP-alpha-D-mannose site. Asp126 contributes to the Mg(2+) binding site. Residue Asp126 coordinates Mn(2+).

The protein belongs to the glycosyltransferase 2 family. In terms of assembly, component of the dolichol-phosphate mannose (DPM) synthase complex composed of DPM1, DPM2 and DPM3; within the complex, directly interacts with DPM3. This interaction may stabilize DPM1. The cofactor is Mg(2+). Mn(2+) serves as cofactor. It depends on Ca(2+) as a cofactor.

It localises to the endoplasmic reticulum. The enzyme catalyses a di-trans,poly-cis-dolichyl phosphate + GDP-alpha-D-mannose = a di-trans,poly-cis-dolichyl beta-D-mannosyl phosphate + GDP. Its pathway is protein modification; protein glycosylation. In terms of biological role, transfers mannose from GDP-mannose to dolichol monophosphate to form dolichol phosphate mannose (Dol-P-Man) which is the mannosyl donor in pathways leading to N-glycosylation, glycosyl phosphatidylinositol membrane anchoring, and O-mannosylation of proteins; catalytic subunit of the dolichol-phosphate mannose (DPM) synthase complex. The polypeptide is Dolichol-phosphate mannosyltransferase subunit 1 (DPM1) (Cricetulus griseus (Chinese hamster)).